We begin with the raw amino-acid sequence, 548 residues long: Membrane protein insertase YidC (548 aa).

Residues N6–D26 form a helical membrane-spanning segment. Residues N28–G56 are disordered. A compositionally biased stretch (low complexity) spans P29–T42. 4 helical membrane passes run F350–Y370, F424–I444, L458–I478, and P499–V519.

It belongs to the OXA1/ALB3/YidC family. Type 1 subfamily. As to quaternary structure, interacts with the Sec translocase complex via SecD. Specifically interacts with transmembrane segments of nascent integral membrane proteins during membrane integration.

Its subcellular location is the cell inner membrane. In terms of biological role, required for the insertion and/or proper folding and/or complex formation of integral membrane proteins into the membrane. Involved in integration of membrane proteins that insert both dependently and independently of the Sec translocase complex, as well as at least some lipoproteins. Aids folding of multispanning membrane proteins. The protein is Membrane protein insertase YidC of Salmonella agona (strain SL483).